A 445-amino-acid chain; its full sequence is ATP synthase subunit b-delta (445 aa).

Residues 1-168 (MSIFIGQLIG…PSSVVIDTAA (168 aa)) form an ATP synthase subunit b region. Residues 3–23 (IFIGQLIGFAVIAFIIVKWVV) form a helical membrane-spanning segment. The segment at 169-445 (TSRLRAASRQ…LAAAQTGLPD (277 aa)) is ATP synthase subunit delta.

In the N-terminal section; belongs to the ATPase B chain family. This sequence in the C-terminal section; belongs to the ATPase delta chain family. As to quaternary structure, F-type ATPases have 2 components, F(1) - the catalytic core - and F(0) - the membrane proton channel. F(1) has five subunits: alpha(3), beta(3), gamma(1), delta(1), epsilon(1). F(0) has three main subunits: a(1), b(2) and c(10-14). The alpha and beta chains form an alternating ring which encloses part of the gamma chain. F(1) is attached to F(0) by a central stalk formed by the gamma and epsilon chains, while a peripheral stalk is formed by the delta and b chains.

Its subcellular location is the cell membrane. Its function is as follows. F(1)F(0) ATP synthase produces ATP from ADP in the presence of a proton or sodium gradient. F-type ATPases consist of two structural domains, F(1) containing the extramembraneous catalytic core and F(0) containing the membrane proton channel, linked together by a central stalk and a peripheral stalk. During catalysis, ATP synthesis in the catalytic domain of F(1) is coupled via a rotary mechanism of the central stalk subunits to proton translocation. In terms of biological role, this fusion protein includes a component of the F(0) channel (subunit b) and of the F(1) subunit (subunit delta). Two copies of subunit b and one of delta together form the peripheral 'stator' stalk which links F(1) to F(0). This Mycolicibacterium smegmatis (strain ATCC 700084 / mc(2)155) (Mycobacterium smegmatis) protein is ATP synthase subunit b-delta (atpFH).